Reading from the N-terminus, the 313-residue chain is Aspartate carbamoyltransferase catalytic subunit (313 aa).

Carbamoyl phosphate is bound by residues arginine 54 and threonine 55. Lysine 82 provides a ligand contact to L-aspartate. 3 residues coordinate carbamoyl phosphate: arginine 104, histidine 132, and glutamine 135. Residues arginine 165 and arginine 219 each coordinate L-aspartate. Carbamoyl phosphate is bound by residues glycine 260 and proline 261.

This sequence belongs to the aspartate/ornithine carbamoyltransferase superfamily. ATCase family. Heterododecamer (2C3:3R2) of six catalytic PyrB chains organized as two trimers (C3), and six regulatory PyrI chains organized as three dimers (R2).

The catalysed reaction is carbamoyl phosphate + L-aspartate = N-carbamoyl-L-aspartate + phosphate + H(+). It participates in pyrimidine metabolism; UMP biosynthesis via de novo pathway; (S)-dihydroorotate from bicarbonate: step 2/3. Its function is as follows. Catalyzes the condensation of carbamoyl phosphate and aspartate to form carbamoyl aspartate and inorganic phosphate, the committed step in the de novo pyrimidine nucleotide biosynthesis pathway. The protein is Aspartate carbamoyltransferase catalytic subunit of Thermobifida fusca (strain YX).